We begin with the raw amino-acid sequence, 223 residues long: UPF0441 protein YgiB (223 aa).

A compositionally biased stretch (low complexity) spans 178–195 (TVPKTAMAPKPATTTTVT). A disordered region spans residues 178 to 223 (TVPKTAMAPKPATTTTVTRGGFGESVAKQSTMQRSAAGTSTRSMGG). The segment covering 204–223 (AKQSTMQRSAAGTSTRSMGG) has biased composition (polar residues).

The protein belongs to the UPF0441 family.

This chain is UPF0441 protein YgiB, found in Salmonella paratyphi B (strain ATCC BAA-1250 / SPB7).